The primary structure comprises 510 residues: Kynurenine 3-monooxygenase (510 aa).

It belongs to the aromatic-ring hydroxylase family. KMO subfamily. FAD serves as cofactor.

It is found in the mitochondrion outer membrane. It catalyses the reaction L-kynurenine + NADPH + O2 + H(+) = 3-hydroxy-L-kynurenine + NADP(+) + H2O. It functions in the pathway cofactor biosynthesis; NAD(+) biosynthesis; quinolinate from L-kynurenine: step 1/3. In terms of biological role, catalyzes the hydroxylation of L-kynurenine (L-Kyn) to form 3-hydroxy-L-kynurenine (L-3OHKyn). Required for synthesis of quinolinic acid. This Aspergillus oryzae (strain ATCC 42149 / RIB 40) (Yellow koji mold) protein is Kynurenine 3-monooxygenase (bna4).